The chain runs to 142 residues: Taurine up-regulated 1 protein (142 aa).

Positions methionine 1–alanine 40 are cleaved as a signal peptide. Topologically, residues arginine 41–glycine 123 are extracellular. Residues alanine 124–methionine 140 form a helical membrane-spanning segment. Residues proline 141–proline 142 are Cytoplasmic-facing.

In terms of tissue distribution, widely expressed in the adult with highest levels in placenta and testis. Also expressed in a number of embryonic tissues at multiple embryonic stages.

Its subcellular location is the nucleus membrane. It localises to the mitochondrion membrane. The protein localises to the cytoplasm. The chain is Taurine up-regulated 1 protein from Mus musculus (Mouse).